A 348-amino-acid chain; its full sequence is NADH-ubiquinone oxidoreductase chain 2 (348 aa).

11 consecutive transmembrane segments (helical) span residues 3 to 23 (PVVL…TFIG), 25 to 45 (HWLL…PLMI), 67 to 87 (SALL…WSLL), 95 to 115 (ATLV…HFWL), 118 to 138 (VLQG…KLAP), 149 to 171 (LNSN…GGLN), 178 to 198 (ILAY…HYSP), 203 to 223 (LNLA…KLFN), 240 to 260 (LSII…LSGF), 274 to 294 (DLAI…FFYL), and 324 to 344 (LILM…PTIF).

It belongs to the complex I subunit 2 family.

Its subcellular location is the mitochondrion inner membrane. The enzyme catalyses a ubiquinone + NADH + 5 H(+)(in) = a ubiquinol + NAD(+) + 4 H(+)(out). Functionally, core subunit of the mitochondrial membrane respiratory chain NADH dehydrogenase (Complex I) that is believed to belong to the minimal assembly required for catalysis. Complex I functions in the transfer of electrons from NADH to the respiratory chain. The immediate electron acceptor for the enzyme is believed to be ubiquinone. The chain is NADH-ubiquinone oxidoreductase chain 2 (MT-ND2) from Squalus acanthias (Spiny dogfish).